A 198-amino-acid chain; its full sequence is Glycerol-3-phosphate acyltransferase (198 aa).

The next 5 helical transmembrane spans lie at 10–30 (LIPILFASYLIGSIPFSWILV), 57–77 (GISFLVLLLDIFKSVLVILIL), 86–106 (IMYLTGFTVVLGHIFPVWFLF), 118–138 (VVLSINIKIFFLFIITWAVVF), and 160–180 (AVTENFNSSIFYIAMSIIVLI).

Belongs to the PlsY family. As to quaternary structure, probably interacts with PlsX.

It localises to the cell inner membrane. It carries out the reaction an acyl phosphate + sn-glycerol 3-phosphate = a 1-acyl-sn-glycero-3-phosphate + phosphate. It functions in the pathway lipid metabolism; phospholipid metabolism. Catalyzes the transfer of an acyl group from acyl-phosphate (acyl-PO(4)) to glycerol-3-phosphate (G3P) to form lysophosphatidic acid (LPA). This enzyme utilizes acyl-phosphate as fatty acyl donor, but not acyl-CoA or acyl-ACP. The chain is Glycerol-3-phosphate acyltransferase from Anaplasma marginale (strain Florida).